We begin with the raw amino-acid sequence, 922 residues long: Hexokinase-3 (922 aa).

The interval 1–23 (MATIGPSGLHPGERASVCPHEGV) is disordered. Hexokinase domains are found at residues 25–469 (RPSG…MVTA) and 475–911 (AAHR…LVTA). The interval 82-218 (HGTEQGDFLV…TYRIDVVAMV (137 aa)) is hexokinase small subdomain 1. 93–100 (ELGATGAS) provides a ligand contact to ATP. Residue 93–102 (ELGATGASLR) coordinates D-glucose 6-phosphate. D-glucose is bound by residues Ser166, 183 to 184 (TK), and 219 to 220 (ND). The interval 219 to 458 (NDTVGTMMGC…CDVSFIPSVD (240 aa)) is hexokinase large subdomain 1. D-glucose 6-phosphate is bound by residues Asp220 and Thr243. D-glucose is bound by residues Asn246, Glu271, and 302–305 (QRFE). Position 424 to 426 (424 to 426 (GGR)) interacts with D-glucose 6-phosphate. ATP is bound by residues 436–437 (RI) and 540–545 (DLGGTN). The tract at residues 529–660 (DGSERGDFLA…AVELNVVAIV (132 aa)) is hexokinase small subdomain 2. Residue 540-544 (DLGGT) participates in D-glucose 6-phosphate binding. Residues 608 to 609 (SF), 625 to 626 (TK), and 661 to 662 (ND) each bind D-glucose. Residues 661–900 (NDTVGTMMSC…CTVTFLQSED (240 aa)) are hexokinase large subdomain 2. 2 residues coordinate D-glucose 6-phosphate: Asp662 and Thr685. Thr685 lines the ATP pocket. Residues 687–688 (TN), Glu713, and Glu747 each bind D-glucose. ATP contacts are provided by residues 752 to 753 (GM), 789 to 793 (TKFLS), and 868 to 872 (TLYKL). Residues 866 to 868 (DGT) and Ser902 each bind D-glucose 6-phosphate.

This sequence belongs to the hexokinase family.

It catalyses the reaction a D-hexose + ATP = a D-hexose 6-phosphate + ADP + H(+). It carries out the reaction D-fructose + ATP = D-fructose 6-phosphate + ADP + H(+). The catalysed reaction is D-glucose + ATP = D-glucose 6-phosphate + ADP + H(+). It participates in carbohydrate metabolism; hexose metabolism. Its pathway is carbohydrate degradation; glycolysis; D-glyceraldehyde 3-phosphate and glycerone phosphate from D-glucose: step 1/4. With respect to regulation, hexokinase is an allosteric enzyme inhibited by its product D-glucose 6-phosphate. Its function is as follows. Catalyzes the phosphorylation of hexose, such as D-glucose and D-fructose, to hexose 6-phosphate (D-glucose 6-phosphate and D-fructose 6-phosphate, respectively). Mediates the initial step of glycolysis by catalyzing phosphorylation of D-glucose to D-glucose 6-phosphate. The polypeptide is Hexokinase-3 (Mus musculus (Mouse)).